The following is a 358-amino-acid chain: Peptide chain release factor 1 (358 aa).

At glutamine 233 the chain carries N5-methylglutamine.

Belongs to the prokaryotic/mitochondrial release factor family. Methylated by PrmC. Methylation increases the termination efficiency of RF1.

The protein resides in the cytoplasm. Peptide chain release factor 1 directs the termination of translation in response to the peptide chain termination codons UAG and UAA. This Clostridium botulinum (strain ATCC 19397 / Type A) protein is Peptide chain release factor 1.